Reading from the N-terminus, the 217-residue chain is Killer cell lectin-like receptor subfamily B member 1F (217 aa).

Residues 1-45 are Cytoplasmic-facing; that stretch reads MDTSRVYGNVKTFRSPGHKQASFPSLSTDACRCPHWHHLALKLGC. The LCK-binding motif motif lies at 31 to 34; it reads CRCP. The chain crosses the membrane as a helical; Signal-anchor for type II membrane protein span at residues 46-66; the sequence is ATLILLLLTLIGLSVFVRFLV. Topologically, residues 67 to 217 are extracellular; that stretch reads QKPLIEKCSM…WICQKTLKHV (151 aa). A C-type lectin domain is found at 101–211; that stretch reads HRNKCLIISQ…CSSDNHWICQ (111 aa). 2 disulfides stabilise this stretch: cysteine 122-cysteine 210 and cysteine 189-cysteine 202.

As to expression, expressed in natural killer cells and a subset of T-cells.

It localises to the membrane. Functionally, binds CLEC2I/Clr-g leading to activation of natural killer cells or stimulation of IL-2 production and proliferation of T-cells in response to antigen stimulation. May contribute to the formation of the immunological synapse between T-cells and antigen-presenting dendritic cells. This chain is Killer cell lectin-like receptor subfamily B member 1F, found in Rattus norvegicus (Rat).